Consider the following 551-residue polypeptide: Periplasmic [NiFe] hydrogenase large subunit (551 aa).

Residues Cys65, Cys68, Cys530, and Cys533 each coordinate Ni(2+). The propeptide occupies 537-551 (VIDPESNQVHKFRIL).

This sequence belongs to the [NiFe]/[NiFeSe] hydrogenase large subunit family. As to quaternary structure, heterodimer of a large and a small subunit. Ni(2+) serves as cofactor.

It localises to the periplasm. The catalysed reaction is 2 Fe(III)-[cytochrome c3] + H2 = 2 Fe(II)-[cytochrome c3] + 2 H(+). The chain is Periplasmic [NiFe] hydrogenase large subunit (hydB) from Megalodesulfovibrio gigas (Desulfovibrio gigas).